Here is a 216-residue protein sequence, read N- to C-terminus: Ribosomal RNA small subunit methyltransferase G (216 aa).

Residues glycine 83, methionine 88, 134-135, and arginine 149 contribute to the S-adenosyl-L-methionine site; that span reads VE.

It belongs to the methyltransferase superfamily. RNA methyltransferase RsmG family.

The protein localises to the cytoplasm. It carries out the reaction guanosine(527) in 16S rRNA + S-adenosyl-L-methionine = N(7)-methylguanosine(527) in 16S rRNA + S-adenosyl-L-homocysteine. Specifically methylates the N7 position of guanine in position 527 of 16S rRNA. This chain is Ribosomal RNA small subunit methyltransferase G, found in Pseudomonas entomophila (strain L48).